Here is a 237-residue protein sequence, read N- to C-terminus: Proteasome subunit alpha type-5-A (237 aa).

An N-acetylmethionine modification is found at Met1. Residues Lys43 and Lys66 each participate in a glycyl lysine isopeptide (Lys-Gly) (interchain with G-Cter in ubiquitin) cross-link.

Belongs to the peptidase T1A family. As to quaternary structure, component of the 20S core complex of the 26S proteasome. The 26S proteasome is composed of a core protease (CP), known as the 20S proteasome, capped at one or both ends by the 19S regulatory particle (RP/PA700). The 20S proteasome core is composed of 28 subunits that are arranged in four stacked rings, resulting in a barrel-shaped structure. The two end rings are each formed by seven alpha subunits, and the two central rings are each formed by seven beta subunits. The catalytic chamber with the active sites is on the inside of the barrel.

The protein localises to the cytoplasm. The protein resides in the nucleus. The proteasome is a multicatalytic proteinase complex which is characterized by its ability to cleave peptides with Arg, Phe, Tyr, Leu, and Glu adjacent to the leaving group at neutral or slightly basic pH. The proteasome has an ATP-dependent proteolytic activity. This chain is Proteasome subunit alpha type-5-A (PAE1), found in Arabidopsis thaliana (Mouse-ear cress).